Here is a 215-residue protein sequence, read N- to C-terminus: CUE domain-containing protein 4, mitochondrial (215 aa).

A mitochondrion-targeting transit peptide spans 1–29; sequence MQPEQLAGCAVVLTVTVLTLRWMFRVDKG. Positions 48–90 constitute a CUE domain; it reads VNSEHVHLVKTVFPHLESSAIAYDLQKTKNVDATIENALRGQP. A disordered region spans residues 109–191; the sequence is GAGASSHSEE…KEREELFRKR (83 aa). 2 stretches are compositionally biased toward low complexity: residues 122–140 and 153–165; these read SHEV…SLAS and SSRI…SSSS. Basic and acidic residues predominate over residues 180-191; the sequence is SKKEREELFRKR.

It localises to the mitochondrion. This Schizosaccharomyces pombe (strain 972 / ATCC 24843) (Fission yeast) protein is CUE domain-containing protein 4, mitochondrial.